We begin with the raw amino-acid sequence, 121 residues long: Probable intron-encoded DNA endonuclease aI1 (121 aa).

It belongs to the LAGLIDADG endonuclease family.

It is found in the mitochondrion. Mitochondrial DNA endonuclease involved in intron homing. The sequence is that of Probable intron-encoded DNA endonuclease aI1 (aI1) from Mycosarcoma maydis (Corn smut fungus).